The primary structure comprises 299 residues: B3 domain-containing transcription factor NGA2 (299 aa).

The interval 1-21 (MNQEDKEKPIEEASSSMEREH) is disordered. The segment at residues 23 to 129 (FDKVVTPSDV…KLYIDWRRRP (107 aa)) is a DNA-binding region (TF-B3). The interval 226-249 (GGGGSVNSTEEESSSSGGSIPRGR) is disordered.

Its subcellular location is the nucleus. Regulates lateral organ growth. Functionally redundant with NGA1, NGA3 and NGA4. The protein is B3 domain-containing transcription factor NGA2 (NGA2) of Arabidopsis thaliana (Mouse-ear cress).